A 1114-amino-acid polypeptide reads, in one-letter code: Hephaestin-like protein (1114 aa).

Positions 1 to 26 (MMDRSNAAFVLTACFIFSQLICHVAA) are cleaved as a signal peptide. 6 consecutive Plastocyanin-like domains span residues 27-210 (ITRT…LICR), 218-365 (QQSG…VTKC), 380-562 (KRTY…LLTC), 572-719 (TRKD…VNTC), 730-915 (KTRD…LIIC), and 924-1114 (TEER…LLKA). The Extracellular portion of the chain corresponds to 27-1091 (ITRTYYIAAV…KTTPKPITAA (1065 aa)). A glycan (N-linked (GlcNAc...) asparagine) is linked at Asn121. Cu cation contacts are provided by His129, His131, His189, and His191. Cys183 and Cys209 are disulfide-bonded. N-linked (GlcNAc...) asparagine glycosylation is present at Asn236. A disulfide bridge connects residues Cys284 and Cys365. Cu cation is bound by residues His303, Cys346, and His351. N-linked (GlcNAc...) asparagine glycans are attached at residues Asn361, Asn478, and Asn489. 2 disulfides stabilise this stretch: Cys536–Cys562 and Cys638–Cys719. Cu cation contacts are provided by His657, Cys700, His705, and Met710. N-linked (GlcNAc...) asparagine glycosylation is present at Asn831. Cys889 and Cys915 form a disulfide bridge. N-linked (GlcNAc...) asparagine glycosylation is present at Asn944. Positions 1014, 1017, 1019, 1059, 1060, 1061, 1065, and 1070 each coordinate Cu cation. A helical membrane pass occupies residues 1092-1112 (SSFVTSSIFIYLSFPVLAMLL). At 1113 to 1114 (KA) the chain is on the cytoplasmic side.

This sequence belongs to the multicopper oxidase family. The cofactor is Cu cation. Component of the acid-insoluble and acid-soluble organic matrix of the aragonitic skeleton (at protein level).

It localises to the membrane. Its function is as follows. May function as a ferroxidase and may be involved in copper transport and homeostasis. In Acropora millepora (Staghorn coral), this protein is Hephaestin-like protein.